Here is a 391-residue protein sequence, read N- to C-terminus: Formate-dependent phosphoribosylglycinamide formyltransferase (391 aa).

N(1)-(5-phospho-beta-D-ribosyl)glycinamide-binding positions include 20 to 21 (EL) and Glu80. Residues Arg112, Lys153, 158-163 (SSGKGQ), 193-196 (EGFI), and Glu201 contribute to the ATP site. An ATP-grasp domain is found at 117–306 (RLAAETLGLP…EFALHVRAIL (190 aa)). Mg(2+) contacts are provided by Glu265 and Glu277. Residues Asp284, Lys354, and 361-362 (RR) contribute to the N(1)-(5-phospho-beta-D-ribosyl)glycinamide site.

This sequence belongs to the PurK/PurT family. Homodimer.

It catalyses the reaction N(1)-(5-phospho-beta-D-ribosyl)glycinamide + formate + ATP = N(2)-formyl-N(1)-(5-phospho-beta-D-ribosyl)glycinamide + ADP + phosphate + H(+). It functions in the pathway purine metabolism; IMP biosynthesis via de novo pathway; N(2)-formyl-N(1)-(5-phospho-D-ribosyl)glycinamide from N(1)-(5-phospho-D-ribosyl)glycinamide (formate route): step 1/1. Functionally, involved in the de novo purine biosynthesis. Catalyzes the transfer of formate to 5-phospho-ribosyl-glycinamide (GAR), producing 5-phospho-ribosyl-N-formylglycinamide (FGAR). Formate is provided by PurU via hydrolysis of 10-formyl-tetrahydrofolate. The polypeptide is Formate-dependent phosphoribosylglycinamide formyltransferase (Shewanella sp. (strain MR-7)).